Consider the following 118-residue polypeptide: Large ribosomal subunit protein bL19 (118 aa).

It belongs to the bacterial ribosomal protein bL19 family.

This protein is located at the 30S-50S ribosomal subunit interface and may play a role in the structure and function of the aminoacyl-tRNA binding site. The polypeptide is Large ribosomal subunit protein bL19 (Geobacter metallireducens (strain ATCC 53774 / DSM 7210 / GS-15)).